We begin with the raw amino-acid sequence, 548 residues long: MNLFKIKANYIDIFNKEIYPASITIENGYIVSIEKIDATLDEYVLPGFIDAHIHIESSFLIPSNFAHLVVQHGTVATISDPHEIANVNGIDGINFMINNSKKTEFKIFFGAPSCVPALSSKFETSGHVLDDQDVDKLMESNDIYYLSEVMDFKGVINKDVEVINKINSALKRNKVVDGHAPGLSPHLTLKYMSSGISTDHECSTIEDARYKLSLGVKIIIREGSAAKNFESLHPLISECSNKYCDSLMFCFDDAHPNDILHGHINSIVARAIGYGHDFFDVLKIACINPVLHYKIPVGLLRIGDPADFIITKDIKTFKIDKTYINGKLVYSDGISHIPLISEIPINNFNCSEKSILDFKFSTKNKMIPIINCINNQIITQKTMIDSNLLAPDFQSNIAEDILKIAIINRYEDNSKISIGFIKNFGIRKGAIGSTVAHDSHNIIVVGTNDEYLCKATNIIIENKGGLCALNNEKTIIIKLPISGLMSTLPAKEIAFQYMKLNDFCKNILGSQLDDPLMTLSFMSLTVVPHLKINDKGLFDVDSFCFLDY.

This sequence belongs to the metallo-dependent hydrolases superfamily. Adenine deaminase family. Requires Mn(2+) as cofactor.

It catalyses the reaction adenine + H2O + H(+) = hypoxanthine + NH4(+). This Borreliella afzelii (strain PKo) (Borrelia afzelii) protein is Adenine deaminase.